Here is a 286-residue protein sequence, read N- to C-terminus: ATP synthase gamma chain (286 aa).

It belongs to the ATPase gamma chain family. F-type ATPases have 2 components, CF(1) - the catalytic core - and CF(0) - the membrane proton channel. CF(1) has five subunits: alpha(3), beta(3), gamma(1), delta(1), epsilon(1). CF(0) has three main subunits: a, b and c.

The protein resides in the cell inner membrane. Produces ATP from ADP in the presence of a proton gradient across the membrane. The gamma chain is believed to be important in regulating ATPase activity and the flow of protons through the CF(0) complex. In Pseudomonas syringae pv. tomato (strain ATCC BAA-871 / DC3000), this protein is ATP synthase gamma chain.